Here is a 343-residue protein sequence, read N- to C-terminus: Protein-glutamate methylesterase/protein-glutamine glutaminase 2 (343 aa).

Residues 5 to 122 (KVLVVDDSAI…SVGDMSGQLV (118 aa)) form the Response regulatory domain. D56 carries the post-translational modification 4-aspartylphosphate. One can recognise a CheB-type methylesterase domain in the interval 154 to 343 (AETSNKVIAI…SIADEIVRMV (190 aa)). Residues S166, H192, and D288 contribute to the active site.

Belongs to the CheB family. Phosphorylated by CheA. Phosphorylation of the N-terminal regulatory domain activates the methylesterase activity.

It is found in the cytoplasm. The enzyme catalyses [protein]-L-glutamate 5-O-methyl ester + H2O = L-glutamyl-[protein] + methanol + H(+). It carries out the reaction L-glutaminyl-[protein] + H2O = L-glutamyl-[protein] + NH4(+). In terms of biological role, involved in chemotaxis. Part of a chemotaxis signal transduction system that modulates chemotaxis in response to various stimuli. Catalyzes the demethylation of specific methylglutamate residues introduced into the chemoreceptors (methyl-accepting chemotaxis proteins or MCP) by CheR. Also mediates the irreversible deamidation of specific glutamine residues to glutamic acid. The protein is Protein-glutamate methylesterase/protein-glutamine glutaminase 2 of Syntrophus aciditrophicus (strain SB).